Here is a 91-residue protein sequence, read N- to C-terminus: Ragulator complex protein LAMTOR5 (91 aa).

Residue Met1 is modified to N-acetylmethionine.

The protein belongs to the LAMTOR5 family. Homodimer. Part of the Ragulator complex composed of LAMTOR1, LAMTOR2, LAMTOR3, LAMTOR4 and LAMTOR5. LAMTOR4 and LAMTOR5 form a heterodimer that interacts, through LAMTOR1, with a LAMTOR2, LAMTOR3 heterodimer. The Ragulator complex interacts with both the mTORC1 complex and heterodimers constituted of the Rag GTPases RagA/RRAGA, RagB/RRAGB, RagC/RRAGC and RagD/RRAGD; regulated by amino acid availability. The Ragulator complex interacts with SLC38A9; the probable amino acid sensor. Component of the lysosomal folliculin complex (LFC), composed of FLCN, FNIP1 (or FNIP2), RagA/RRAGA or RagB/RRAGB GDP-bound, RagC/RRAGC or RagD/RRAGD GTP-bound, and Ragulator. Interacts with phosphorylated BIRC5; the resulting complex binds pro-caspase-9, as well as active caspase-9, but much less efficiently. Interacts with SUPV3L1.

The protein resides in the lysosome. The protein localises to the cytoplasm. Its subcellular location is the cytosol. Its function is as follows. As part of the Ragulator complex it is involved in amino acid sensing and activation of mTORC1, a signaling complex promoting cell growth in response to growth factors, energy levels, and amino acids. Activated by amino acids through a mechanism involving the lysosomal V-ATPase, the Ragulator plays a dual role for the small GTPases Rag (RagA/RRAGA, RagB/RRAGB, RagC/RRAGC and/or RagD/RRAGD): it (1) acts as a guanine nucleotide exchange factor (GEF), activating the small GTPases Rag and (2) mediates recruitment of Rag GTPases to the lysosome membrane. Activated Ragulator and Rag GTPases function as a scaffold recruiting mTORC1 to lysosomes where it is in turn activated. When complexed to BIRC5, interferes with apoptosome assembly, preventing recruitment of pro-caspase-9 to oligomerized APAF1, thereby selectively suppressing apoptosis initiated via the mitochondrial/cytochrome c pathway. The protein is Ragulator complex protein LAMTOR5 (LAMTOR5) of Bos taurus (Bovine).